The following is a 96-amino-acid chain: Non-specific lipid-transfer protein 2 (96 aa).

Residues 1-27 form the signal peptide; the sequence is MMRRLAVLVLAVAMVAACGGGVVGVAG. 4 disulfides stabilise this stretch: Cys-30–Cys-62, Cys-38–Cys-52, Cys-53–Cys-88, and Cys-64–Cys-95.

Belongs to the plant LTP family. B11E subfamily.

Functionally, transfer lipids across membranes. May play a role in plant defense or in the biosynthesis of cuticle layers. This Oryza sativa subsp. indica (Rice) protein is Non-specific lipid-transfer protein 2 (LTP-2).